The primary structure comprises 358 residues: Methylthioribose-1-phosphate isomerase (358 aa).

Residues 54–56 (RGA), R96, and Q205 each bind substrate. The active-site Proton donor is D246. 256-257 (NK) is a binding site for substrate.

Belongs to the eIF-2B alpha/beta/delta subunits family. MtnA subfamily.

The catalysed reaction is 5-(methylsulfanyl)-alpha-D-ribose 1-phosphate = 5-(methylsulfanyl)-D-ribulose 1-phosphate. Its pathway is amino-acid biosynthesis; L-methionine biosynthesis via salvage pathway; L-methionine from S-methyl-5-thio-alpha-D-ribose 1-phosphate: step 1/6. Catalyzes the interconversion of methylthioribose-1-phosphate (MTR-1-P) into methylthioribulose-1-phosphate (MTRu-1-P). In Ectopseudomonas mendocina (strain ymp) (Pseudomonas mendocina), this protein is Methylthioribose-1-phosphate isomerase.